The following is a 284-amino-acid chain: Prolyl 4-hydroxylase subunit alpha (284 aa).

In terms of domain architecture, Fe2OG dioxygenase spans 169–284 (NFNSIKTQTQ…PRIAITTWIY (116 aa)). Fe cation is bound by residues His-191, Asp-193, and His-266. Position 276 (Arg-276) interacts with 2-oxoglutarate.

Belongs to the P4HA family. Heterotetramer of two alpha-1 chains and two beta chains (the beta chain is the multi-functional PDI). It depends on Fe(2+) as a cofactor. Requires L-ascorbate as cofactor.

The protein resides in the cytoplasm. The catalysed reaction is L-prolyl-[Skp1 protein] + 2-oxoglutarate + O2 = trans-4-hydroxy-L-prolyl-[Skp1 protein] + succinate + CO2. With respect to regulation, inhibited by the prolyl-hydroxylase inhibitors alpha,alpha'-dipyridyl and ethyl 3,4-dihydroxybenzoate. In terms of biological role, catalyzes the post-translational formation of 4-hydroxyproline. Probably hydroxylates skp1 on Pro-143. The sequence is that of Prolyl 4-hydroxylase subunit alpha (phyA) from Dictyostelium discoideum (Social amoeba).